The sequence spans 249 residues: 5'-nucleotidase SurE (249 aa).

Asp-8, Asp-9, Ser-39, and Asn-91 together coordinate a divalent metal cation.

It belongs to the SurE nucleotidase family. The cofactor is a divalent metal cation.

The protein resides in the cytoplasm. The enzyme catalyses a ribonucleoside 5'-phosphate + H2O = a ribonucleoside + phosphate. Nucleotidase that shows phosphatase activity on nucleoside 5'-monophosphates. The polypeptide is 5'-nucleotidase SurE (Pseudomonas putida (strain ATCC 47054 / DSM 6125 / CFBP 8728 / NCIMB 11950 / KT2440)).